The following is a 775-amino-acid chain: MVKSQRNGKKGAKVLSRKEKRQSEKEEMDSLRQRIEEYNPEVDEASIKHFSDLPITQNTLRGLKECSFVSLTDIQKKSIPVALKGEDLMGTARTGSGKTLAFLIPVIEILLRNDITEYDGLAALIVSPTRELAVQIFEVLAKIGKYNSFSAGLVTGGKDVQYEKERISRMNILVGTPGRISQHLNESVGMETSNLQVLVLDEADRCLDMGFRKQIDNILNHLPRTRQTLLFSATHTDSVQDLARLSLTNPKRIGTSSDQDISAIPESLDQYYVKVPLNEKLDVLWSFIKSHLKSKILVFFSSSKQVQYAYETFRTLQPGIPLMKLYGRHKQTSRLETTVKFSQAQHACLFATDIVARGLDFPAIDWVIQVDCPEDVATYVHRVGRSARFGRQGKSLLMLLPTEEDGMLKRMKVHKIEPKMMNIKEKSKKSIRPQLQSLCFKDPVIKNLGQRAFIAYFRSVYIQKDKDIFKVDELPVEEYAASLGLPGAPKIKIKGGEINKEKKNQSRKLLQLSKADENGELKEDDDKPAKVRTKYDRIFDRKNQTILSEHYLNMTKSAHGGKDDDEDEDFMTVKRQDHELVDDELPDLLLPVSKRQAKKALSRKATLASKGNPTKLKFDDDGVPHAIYELEGEEDFEKAGDAKQQKMEFVQKEQEAMKITDLADREVERQKRQEKKRKRKEIERRIREEEWDDGSGMDGEDLPDLERDMEPTEAKPKRTSNWFDDDDDDNDGGDEKHGNGKPPVKKAKSDSKYVEFEEPETLEDLESLAATLIGN.

Positions 1–12 (MVKSQRNGKKGA) are enriched in basic residues. The segment at 1-30 (MVKSQRNGKKGAKVLSRKEKRQSEKEEMDS) is disordered. Basic and acidic residues predominate over residues 21-30 (RQSEKEEMDS). A Q motif motif is present at residues 48 to 76 (KHFSDLPITQNTLRGLKECSFVSLTDIQK). A Helicase ATP-binding domain is found at 79 to 253 (IPVALKGEDL…RLSLTNPKRI (175 aa)). An ATP-binding site is contributed by 92 to 99 (ARTGSGKT). A DEAD box motif is present at residues 201–204 (DEAD). One can recognise a Helicase C-terminal domain in the interval 267 to 439 (SLDQYYVKVP…SIRPQLQSLC (173 aa)). A disordered region spans residues 633-760 (EEDFEKAGDA…SKYVEFEEPE (128 aa)). Residues 637 to 671 (EKAGDAKQQKMEFVQKEQEAMKITDLADREVERQK) are compositionally biased toward basic and acidic residues. A compositionally biased stretch (acidic residues) spans 689 to 703 (EEWDDGSGMDGEDLP). Residues 704 to 716 (DLERDMEPTEAKP) are compositionally biased toward basic and acidic residues. The span at 723–732 (FDDDDDDNDG) shows a compositional bias: acidic residues.

Belongs to the DEAD box helicase family. DDX10/DBP4 subfamily. As to quaternary structure, interacts with the U3 and U14 snoRNAs. Associates with pre-ribosomal complexes.

It is found in the nucleus. It localises to the nucleolus. The enzyme catalyses ATP + H2O = ADP + phosphate + H(+). Its function is as follows. ATP-dependent RNA helicase required for ribosome biogenesis. Involved in the release of U14 snoRNA in pre-ribosomal complexes. Required for pre-rRNA cleavage at site A2. The protein is ATP-dependent RNA helicase DBP4 (DBP4) of Lodderomyces elongisporus (strain ATCC 11503 / CBS 2605 / JCM 1781 / NBRC 1676 / NRRL YB-4239) (Yeast).